The primary structure comprises 399 residues: Fructose-bisphosphate aldolase 1, chloroplastic (399 aa).

Residues 1-48 (MASSTATMLKASPVKSDWVKGQSLLLRQPSSVSAIRSHVAPSALTVRA) constitute a chloroplast transit peptide. Substrate is bound at residue R96. S158 is subject to Phosphoserine. A substrate-binding site is contributed by K186. S216 is modified (phosphoserine). E226 acts as the Proton acceptor in catalysis. K268 serves as the catalytic Schiff-base intermediate with dihydroxyacetone-P. Residue 310–312 (SGG) participates in substrate binding. Position 395 is an N6,N6,N6-trimethyllysine (K395).

Belongs to the class I fructose-bisphosphate aldolase family. Homotetramer. Post-translationally, can be trimethylated at Lys-395 by LSMT-L, but the trimethylation has no effect in vitro on the kinetic properties of the enzyme. S-glutathionylated. In terms of tissue distribution, highly expressed in rosettes leaves and cauline leaves.

The protein localises to the plastid. It localises to the chloroplast. The protein resides in the plastoglobule. Its subcellular location is the chloroplast stroma. It carries out the reaction beta-D-fructose 1,6-bisphosphate = D-glyceraldehyde 3-phosphate + dihydroxyacetone phosphate. It participates in carbohydrate degradation; glycolysis; D-glyceraldehyde 3-phosphate and glycerone phosphate from D-glucose: step 4/4. Its function is as follows. Plays a key role in glycolysis and gluconeogenesis. The protein is Fructose-bisphosphate aldolase 1, chloroplastic of Arabidopsis thaliana (Mouse-ear cress).